The primary structure comprises 469 residues: GTPase Der (469 aa).

2 EngA-type G domains span residues 3–167 (PTVA…PDEV) and 175–348 (PKFA…RAAM). GTP-binding positions include 9-16 (GRPNVGKS), 56-60 (DTGGF), 119-122 (NKAE), 181-188 (GRPNVGKS), 228-232 (DTAGV), and 293-296 (NKWD). The 85-residue stretch at 349-433 (SKLATPKLTR…PLRVQYKSSE (85 aa)) folds into the KH-like domain. Residues 429 to 469 (YKSSENPFDNDEKDKPRAKPKPMSKMRGREKEVRYGKNSKK) are disordered.

The protein belongs to the TRAFAC class TrmE-Era-EngA-EngB-Septin-like GTPase superfamily. EngA (Der) GTPase family. Associates with the 50S ribosomal subunit.

GTPase that plays an essential role in the late steps of ribosome biogenesis. This chain is GTPase Der, found in Chromobacterium violaceum (strain ATCC 12472 / DSM 30191 / JCM 1249 / CCUG 213 / NBRC 12614 / NCIMB 9131 / NCTC 9757 / MK).